A 102-amino-acid chain; its full sequence is MSTTSSKVAIKPLEDRIVVQPLDAEQTTASGLVIPDTAKEKPQEGVVLAVGPGRFENGERLPLDVKTGDVVLYSKYGGTEVKYNGEEYLVLSARDVLAIVEK.

Belongs to the GroES chaperonin family. In terms of assembly, heptamer of 7 subunits arranged in a ring. Interacts with the chaperonin GroEL.

Its subcellular location is the cytoplasm. Together with the chaperonin GroEL, plays an essential role in assisting protein folding. The GroEL-GroES system forms a nano-cage that allows encapsulation of the non-native substrate proteins and provides a physical environment optimized to promote and accelerate protein folding. GroES binds to the apical surface of the GroEL ring, thereby capping the opening of the GroEL channel. The protein is Co-chaperonin GroES of Streptomyces griseus subsp. griseus (strain JCM 4626 / CBS 651.72 / NBRC 13350 / KCC S-0626 / ISP 5235).